The chain runs to 214 residues: Somatotropin-A (214 aa).

The signal sequence occupies residues 1-25; that stretch reads MATGFCSSFGLLVVLLLKNVADVGA. Cystine bridges form between Cys-77–Cys-187 and Cys-204–Cys-212.

It belongs to the somatotropin/prolactin family.

Its subcellular location is the secreted. Its function is as follows. Growth hormone plays an important role in growth control. The protein is Somatotropin-A (gh-a) of Xenopus laevis (African clawed frog).